Reading from the N-terminus, the 325-residue chain is N-acetyl-gamma-glutamyl-phosphate reductase (325 aa).

Cys-135 is a catalytic residue.

The protein belongs to the NAGSA dehydrogenase family. Type 1 subfamily.

It localises to the cytoplasm. The catalysed reaction is N-acetyl-L-glutamate 5-semialdehyde + phosphate + NADP(+) = N-acetyl-L-glutamyl 5-phosphate + NADPH + H(+). Its pathway is amino-acid biosynthesis; L-arginine biosynthesis; N(2)-acetyl-L-ornithine from L-glutamate: step 3/4. Its function is as follows. Catalyzes the NADPH-dependent reduction of N-acetyl-5-glutamyl phosphate to yield N-acetyl-L-glutamate 5-semialdehyde. This chain is N-acetyl-gamma-glutamyl-phosphate reductase, found in Karelsulcia muelleri (strain GWSS) (Sulcia muelleri).